The following is a 660-amino-acid chain: Bifunctional polymyxin resistance protein ArnA (660 aa).

Residues 1–304 (MKAVIFAYHD…TLGLVAGARL (304 aa)) form a formyltransferase ArnAFT region. H104 acts as the Proton donor; for formyltransferase activity in catalysis. (6R)-10-formyltetrahydrofolate is bound by residues R114 and 136-140 (VKRAD). Residues 314–660 (RRIRVLILGV…RSVDVAERAS (347 aa)) are dehydrogenase ArnADH. Residues D347 and 368–369 (DI) each bind NAD(+). UDP-alpha-D-glucuronate contacts are provided by residues A393, Y398, and 432–433 (TS). E434 (proton acceptor; for decarboxylase activity) is an active-site residue. Residues R460, N492, 526 to 535 (KLIDGGQQKR), and Y613 each bind UDP-alpha-D-glucuronate. R619 (proton donor; for decarboxylase activity) is an active-site residue.

It in the N-terminal section; belongs to the Fmt family. UDP-L-Ara4N formyltransferase subfamily. In the C-terminal section; belongs to the NAD(P)-dependent epimerase/dehydratase family. UDP-glucuronic acid decarboxylase subfamily. Homohexamer, formed by a dimer of trimers.

It catalyses the reaction UDP-alpha-D-glucuronate + NAD(+) = UDP-beta-L-threo-pentopyranos-4-ulose + CO2 + NADH. It carries out the reaction UDP-4-amino-4-deoxy-beta-L-arabinose + (6R)-10-formyltetrahydrofolate = UDP-4-deoxy-4-formamido-beta-L-arabinose + (6S)-5,6,7,8-tetrahydrofolate + H(+). Its pathway is nucleotide-sugar biosynthesis; UDP-4-deoxy-4-formamido-beta-L-arabinose biosynthesis; UDP-4-deoxy-4-formamido-beta-L-arabinose from UDP-alpha-D-glucuronate: step 1/3. It participates in nucleotide-sugar biosynthesis; UDP-4-deoxy-4-formamido-beta-L-arabinose biosynthesis; UDP-4-deoxy-4-formamido-beta-L-arabinose from UDP-alpha-D-glucuronate: step 3/3. The protein operates within bacterial outer membrane biogenesis; lipopolysaccharide biosynthesis. Its function is as follows. Bifunctional enzyme that catalyzes the oxidative decarboxylation of UDP-glucuronic acid (UDP-GlcUA) to UDP-4-keto-arabinose (UDP-Ara4O) and the addition of a formyl group to UDP-4-amino-4-deoxy-L-arabinose (UDP-L-Ara4N) to form UDP-L-4-formamido-arabinose (UDP-L-Ara4FN). The modified arabinose is attached to lipid A and is required for resistance to polymyxin and cationic antimicrobial peptides. In Salmonella heidelberg (strain SL476), this protein is Bifunctional polymyxin resistance protein ArnA.